The chain runs to 348 residues: Protein RecA (348 aa).

65–72 (GPESSGKT) contributes to the ATP binding site.

Belongs to the RecA family.

It localises to the cytoplasm. Its function is as follows. Can catalyze the hydrolysis of ATP in the presence of single-stranded DNA, the ATP-dependent uptake of single-stranded DNA by duplex DNA, and the ATP-dependent hybridization of homologous single-stranded DNAs. It interacts with LexA causing its activation and leading to its autocatalytic cleavage. This chain is Protein RecA, found in Vibrio natriegens.